Reading from the N-terminus, the 224-residue chain is Glycerol-3-phosphate acyltransferase (224 aa).

Transmembrane regions (helical) follow at residues 14–34 (INMI…GWLL), 70–90 (YLSI…VLGA), 99–119 (TQWS…YLGF), 129–149 (IGSV…IWGI), 162–182 (LIGV…LPLP), and 185–205 (ISII…LFIF).

It belongs to the PlsY family. In terms of assembly, probably interacts with PlsX.

The protein localises to the cell inner membrane. The enzyme catalyses an acyl phosphate + sn-glycerol 3-phosphate = a 1-acyl-sn-glycero-3-phosphate + phosphate. The protein operates within lipid metabolism; phospholipid metabolism. Its function is as follows. Catalyzes the transfer of an acyl group from acyl-phosphate (acyl-PO(4)) to glycerol-3-phosphate (G3P) to form lysophosphatidic acid (LPA). This enzyme utilizes acyl-phosphate as fatty acyl donor, but not acyl-CoA or acyl-ACP. The protein is Glycerol-3-phosphate acyltransferase of Helicobacter hepaticus (strain ATCC 51449 / 3B1).